The primary structure comprises 117 residues: uncharacterized protein (117 aa).

Transmembrane regions (helical) follow at residues 3 to 23 (AVPI…NILL), 40 to 60 (FLTP…LLFA), 66 to 86 (LEVS…LIIA), and 94 to 114 (PFHL…IFLA).

The protein to E.coli and S.aureus ethidium bromide resistance proteins (ebr/QacC/EmrE/MvrC).

The protein localises to the cell membrane. This is an uncharacterized protein from Sinorhizobium fredii (strain NBRC 101917 / NGR234).